Reading from the N-terminus, the 250-residue chain is Green-light absorbing proteorhodopsin (250 aa).

A signal peptide spans 1-18 (MGKLLLILGSVIALPTFA). The Extracellular segment spans residues 19 to 29 (AGGGDLDASDY). Residues 30–53 (TGVSFWLVTAALLASTVFFFVERD) traverse the membrane as a helical segment. Over 54–58 (RVSAK) the chain is Cytoplasmic. The helical transmembrane segment at 59-87 (WKTSLTVSGLVTGIAFWHYMYMRGVWIET) threads the bilayer. At 88 to 90 (GDS) the chain is on the extracellular side. A helical membrane pass occupies residues 91–118 (PTVFRYIDWLLTVPLLICEFYLILAAAT). Topologically, residues 119-121 (NVA) are cytoplasmic. A helical transmembrane segment spans residues 122–144 (GSLFKKLLVGSLVMLVFGYMGEA). Topologically, residues 145–147 (GIM) are extracellular. A helical membrane pass occupies residues 148-177 (AAWPAFIIGCLAWVYMIYELWAGEGKSACN). The Cytoplasmic portion of the chain corresponds to 178–180 (TAS). The helical transmembrane segment at 181–208 (PAVQSAYNTMMYIIIFGWAIYPVGYFTG) threads the bilayer. Over 209–218 (YLMGDGGSAL) the chain is Extracellular. A helical membrane pass occupies residues 219–249 (NLNLIYNLADFVNKILFGLIIWNVAVKESSN). An N6-(retinylidene)lysine modification is found at K232. A250 is a topological domain (cytoplasmic).

Belongs to the archaeal/bacterial/fungal opsin family. In terms of assembly, homopentamer. GPR protomers assemble into a pentamer around a central pore with a C5 symmetry axis. In terms of processing, contains one covalently linked retinal chromophore per subunit.

Its subcellular location is the cell membrane. Light-driven proton pump. This Unknown prokaryotic organism protein is Green-light absorbing proteorhodopsin.